The primary structure comprises 627 residues: Probable inactive receptor kinase At3g02880 (627 aa).

A signal peptide spans 1-23 (MKYKRKLSLSVVFLFVFYLAAVT). LRR repeat units follow at residues 91–112 (QLKT…DFSN), 115–137 (LLRY…LFTL), 139–161 (SIIR…VNSA), 163–184 (RLVT…ITLP), and 185–206 (LQQF…LSSW). The tract at residues 222–246 (DTCEAESPNGGDAGGPNTPPEKKDS) is disordered. The chain crosses the membrane as a helical span at residues 253-273 (AIVGIVIGCVVGLLLLLLILF). A Protein kinase domain is found at 345 to 620 (KASAEVLGKG…LIEEVSHSSG (276 aa)). The residue at position 347 (serine 347) is a Phosphoserine. Residues 351–359 (LGKGTVGSS) and lysine 373 contribute to the ATP site. Residues 389-409 (LHVLGSMSHANLVTLIAYYFS) form a helical membrane-spanning segment. The residue at position 424 (serine 424) is a Phosphoserine. Threonine 444 is modified (phosphothreonine). Residue serine 519 is modified to Phosphoserine. Threonine 595 is subject to Phosphothreonine. 2 positions are modified to phosphoserine: serine 621 and serine 626.

This sequence belongs to the protein kinase superfamily. Ser/Thr protein kinase family.

The protein resides in the membrane. The sequence is that of Probable inactive receptor kinase At3g02880 from Arabidopsis thaliana (Mouse-ear cress).